Here is a 527-residue protein sequence, read N- to C-terminus: tRNA-2-methylthio-N(6)-dimethylallyladenosine synthase (527 aa).

The tract at residues 1–27 (MMNEKQRLQYTAQIETDHPTDKKSALD) is disordered. A compositionally biased stretch (basic and acidic residues) spans 15–27 (ETDHPTDKKSALD). One can recognise an MTTase N-terminal domain in the interval 84 to 202 (RKFYIRTYGC…LPYILKEAYM (119 aa)). The [4Fe-4S] cluster site is built by Cys-93, Cys-129, Cys-163, Cys-239, Cys-243, and Cys-246. In terms of domain architecture, Radical SAM core spans 225 to 455 (RKGNIKAWVN…NALVNEISAK (231 aa)). The TRAM domain maps to 458-521 (KEYEGQVVEV…TWTLNGEMVE (64 aa)).

Belongs to the methylthiotransferase family. MiaB subfamily. Monomer. [4Fe-4S] cluster is required as a cofactor.

Its subcellular location is the cytoplasm. The catalysed reaction is N(6)-dimethylallyladenosine(37) in tRNA + (sulfur carrier)-SH + AH2 + 2 S-adenosyl-L-methionine = 2-methylsulfanyl-N(6)-dimethylallyladenosine(37) in tRNA + (sulfur carrier)-H + 5'-deoxyadenosine + L-methionine + A + S-adenosyl-L-homocysteine + 2 H(+). In terms of biological role, catalyzes the methylthiolation of N6-(dimethylallyl)adenosine (i(6)A), leading to the formation of 2-methylthio-N6-(dimethylallyl)adenosine (ms(2)i(6)A) at position 37 in tRNAs that read codons beginning with uridine. The chain is tRNA-2-methylthio-N(6)-dimethylallyladenosine synthase from Anoxybacillus flavithermus (strain DSM 21510 / WK1).